Reading from the N-terminus, the 76-residue chain is Acyl carrier protein (76 aa).

The 74-residue stretch at 1–74 folds into the Carrier domain; it reads MFDKLKEIIA…DVVEYITEHT (74 aa). Serine 34 carries the post-translational modification O-(pantetheine 4'-phosphoryl)serine.

This sequence belongs to the acyl carrier protein (ACP) family. 4'-phosphopantetheine is transferred from CoA to a specific serine of apo-ACP by AcpS. This modification is essential for activity because fatty acids are bound in thioester linkage to the sulfhydryl of the prosthetic group.

Its subcellular location is the cytoplasm. It participates in lipid metabolism; fatty acid biosynthesis. Functionally, carrier of the growing fatty acid chain in fatty acid biosynthesis. This is Acyl carrier protein from Clostridium perfringens (strain ATCC 13124 / DSM 756 / JCM 1290 / NCIMB 6125 / NCTC 8237 / Type A).